The chain runs to 219 residues: MRLILLGPPGAGKGTQAAHICEAFGIPQISTGDMLRAAVKAGTPLGQQAKKIMDEGGLVSDDIILGLIEERVAQADCANGFLFDGFPRTIAQADGLNDQGIRIDAVVEIQVPDEEIVDRMAGRRVHPGSGRVYHVTHNPPRQEGKDDVTGEDLVQREDDREETVRHRLGVYHEQTRPLVDYYSQWAQKGGADAPAYITVDGQRPVETVRDEILAALKAR.

ATP is bound at residue 10-15; sequence GAGKGT. Residues 30 to 59 form an NMP region; it reads STGDMLRAAVKAGTPLGQQAKKIMDEGGLV. AMP-binding positions include threonine 31, arginine 36, 57-59, 85-88, and glutamine 92; these read GLV and GFPR. The segment at 122-159 is LID; sequence GRRVHPGSGRVYHVTHNPPRQEGKDDVTGEDLVQREDD. ATP-binding positions include arginine 123 and 132-133; that span reads VY. The tract at residues 128-150 is disordered; sequence GSGRVYHVTHNPPRQEGKDDVTG. Positions 140-150 are enriched in basic and acidic residues; it reads PRQEGKDDVTG. Positions 156 and 167 each coordinate AMP. Residue arginine 203 coordinates ATP.

This sequence belongs to the adenylate kinase family. Monomer.

The protein localises to the cytoplasm. The catalysed reaction is AMP + ATP = 2 ADP. The protein operates within purine metabolism; AMP biosynthesis via salvage pathway; AMP from ADP: step 1/1. Functionally, catalyzes the reversible transfer of the terminal phosphate group between ATP and AMP. Plays an important role in cellular energy homeostasis and in adenine nucleotide metabolism. The polypeptide is Adenylate kinase (Halorhodospira halophila (strain DSM 244 / SL1) (Ectothiorhodospira halophila (strain DSM 244 / SL1))).